A 168-amino-acid chain; its full sequence is Urease accessory protein UreE (168 aa).

The interval 137 to 168 is disordered; it reads PESGAYHGTTGHGGGHSHSHGHSHDHHHDHSH. Over residues 151 to 161 the composition is skewed to basic residues; the sequence is GHSHSHGHSHD.

Belongs to the UreE family.

It localises to the cytoplasm. In terms of biological role, involved in urease metallocenter assembly. Binds nickel. Probably functions as a nickel donor during metallocenter assembly. This is Urease accessory protein UreE from Saccharophagus degradans (strain 2-40 / ATCC 43961 / DSM 17024).